The primary structure comprises 195 residues: HTH-type transcriptional regulator BetI (195 aa).

The HTH tetR-type domain occupies 8–68 (SIRRRQLIDA…ATMRDITSQL (61 aa)). The H-T-H motif DNA-binding region spans 31–50 (TIAQIARRAGVSTGIISHYF).

It participates in amine and polyamine biosynthesis; betaine biosynthesis via choline pathway [regulation]. Repressor involved in the biosynthesis of the osmoprotectant glycine betaine. It represses transcription of the choline transporter BetT and the genes of BetAB involved in the synthesis of glycine betaine. The chain is HTH-type transcriptional regulator BetI from Escherichia coli (strain K12 / DH10B).